The chain runs to 547 residues: MTELSIRPDEIRDALQRFVSEYQPDAASKEEVGTVAQAGDGIARVSGLPSAMANELLEFEDGTMGLALNLDTREIGVVILGDFEGIEEGQTVRRTGEILSVPVGDNFMGRVVDPLGKPIDGLGEIEAETRRALELQAPTVMQRKSVHEPLATGIKAIDSMTPIGRGQRQLIIGDRATGKTTIAIDTIINQKQNWESGDPAKQVRCIYVAIGQKGSTIASVRGALEEAGALEYTTIVASPASDSAGFKYLAPYTGSAIGQHWMYDGKHVLIIFDDLTKQAEAYRAVSLLLRRPPGREAYPGDVFYLHSRLLERCAKLSDDMGAGSMTGLPIIETKANDVSAYIPTNVISITDGQIFLQSDLFASNQRPAIDVGVSVSRVGGSAMTKAMKAVTGSLKVDLAQFRAMEAFAMFASDLDAASRQQLDRGQRLMALLKQPAYSPYPVEEMTVSLWLGTSGRLDKVPTEDVLRFEREFLDFLRRSHEGILSAIRETLKFEDDTESSLEDAYNSFLDQFQTSEGGSIKVGHEPEAEALADEDVEQEQIVRQKRG.

173 to 180 is a binding site for ATP; it reads GDRATGKT. The segment at 526-547 is disordered; it reads PEAEALADEDVEQEQIVRQKRG. The segment covering 528–538 has biased composition (acidic residues); that stretch reads AEALADEDVEQ.

The protein belongs to the ATPase alpha/beta chains family. F-type ATPases have 2 components, CF(1) - the catalytic core - and CF(0) - the membrane proton channel. CF(1) has five subunits: alpha(3), beta(3), gamma(1), delta(1), epsilon(1). CF(0) has three main subunits: a(1), b(2) and c(9-12). The alpha and beta chains form an alternating ring which encloses part of the gamma chain. CF(1) is attached to CF(0) by a central stalk formed by the gamma and epsilon chains, while a peripheral stalk is formed by the delta and b chains.

It localises to the cell membrane. The catalysed reaction is ATP + H2O + 4 H(+)(in) = ADP + phosphate + 5 H(+)(out). In terms of biological role, produces ATP from ADP in the presence of a proton gradient across the membrane. The alpha chain is a regulatory subunit. The polypeptide is ATP synthase subunit alpha (Nocardioides sp. (strain ATCC BAA-499 / JS614)).